Reading from the N-terminus, the 940-residue chain is Inter-alpha-trypsin inhibitor heavy chain H5 (940 aa).

The N-terminal stretch at 1 to 16 is a signal peptide; that stretch reads MLLLLGLCLGLSQCVG. One can recognise a VIT domain in the interval 35 to 161; the sequence is VPRQVRLLQR…KAAFFLSYEE (127 aa). N-linked (GlcNAc...) asparagine glycans are attached at residues Asn-97 and Asn-127. 2 disordered regions span residues 117–136 and 208–227; these read KSGD…NGEK and SRQR…PSTV. N-linked (GlcNAc...) asparagine glycosylation is present at Asn-231. Residues 295–478 form the VWFA domain; that stretch reads NVVFVLDSSA…SQLIGFYDEI (184 aa). The segment at 405 to 432 is disordered; that stretch reads DGWEAHGRGDAHPQDPQQHPRGRPRPSL. Over residues 407 to 417 the composition is skewed to basic and acidic residues; it reads WEAHGRGDAHP. The N-linked (GlcNAc...) asparagine glycan is linked to Asn-508. The tract at residues 541-571 is disordered; the sequence is PKTDVPVGPQKAGKDVTGSPRPGGDGERNPN. Asn-774, Asn-793, and Asn-860 each carry an N-linked (GlcNAc...) asparagine glycan.

The protein belongs to the ITIH family.

The protein localises to the secreted. Functionally, may act as a tumor suppressor. The polypeptide is Inter-alpha-trypsin inhibitor heavy chain H5 (ITIH5) (Pongo abelii (Sumatran orangutan)).